We begin with the raw amino-acid sequence, 495 residues long: Ferruginol synthase (495 aa).

M1 is a topological domain (lumenal). A helical membrane pass occupies residues 2–22 (DSFPLLAALFFIAATITFLSF). The Cytoplasmic segment spans residues 23 to 495 (RRRRNLPPGP…PLRIIPIVKS (473 aa)). Position 437 (C437) interacts with heme.

This sequence belongs to the cytochrome P450 family. Heme serves as cofactor. As to expression, expression is more abundant in the rhizome.

It is found in the endoplasmic reticulum membrane. The enzyme catalyses abieta-8,11,13-triene + reduced [NADPH--hemoprotein reductase] + O2 = ferruginol + oxidized [NADPH--hemoprotein reductase] + H2O + H(+). In terms of biological role, cytochrome P450 enzyme (CYP) which catalyzes a unique two-electron oxidation cascade on abieta-8,11,13-triene to produce ferruginol, an intermediate in tanshinone biosynthesis. This chain is Ferruginol synthase, found in Salvia miltiorrhiza (Chinese sage).